Here is a 392-residue protein sequence, read N- to C-terminus: Pannexin-3 (392 aa).

Residues 1-39 (MSLAHTAAEYMLSDALLPDRRGPRLKGLRLELPLDRIVK) are Cytoplasmic-facing. Residues 40 to 60 (FVAVGSPLLLMSLAFAQEFSS) traverse the membrane as a helical segment. The Extracellular segment spans residues 61–113 (GSPISCFSPSNFSIRQAAYVDSSCWDSLLHHKQDGPGQDKMKSLWPHKALPYS). Asparagine 71 is a glycosylation site (N-linked (GlcNAc...) asparagine). Residues 114–134 (LLALALLMYLPVLLWQYAAVP) traverse the membrane as a helical segment. Over 135 to 215 (ALSSDLLFII…VATYLLRNSL (81 aa)) the chain is Cytoplasmic. The helical transmembrane segment at 216 to 236 (LLIFTSATYLYLGHFHLDVFF) threads the bilayer. The Extracellular segment spans residues 237-267 (QEEFSCSIKTGLLSDETHVPNLITCRLTSLS). The helical transmembrane segment at 268 to 288 (IFQIVSLSSVAIYTILVPVII) threads the bilayer. The Cytoplasmic portion of the chain corresponds to 289–392 (YNLTRLCRWD…LTNSACDEHP (104 aa)).

The protein belongs to the pannexin family. Homoheptameric.

It is found in the cell membrane. Its subcellular location is the cell junction. It localises to the gap junction. The protein resides in the endoplasmic reticulum membrane. The catalysed reaction is Ca(2+)(in) = Ca(2+)(out). It catalyses the reaction ATP(in) = ATP(out). Regulator of osteoblast differentiation by functionning as a Ca(2+) channel in the endoplasmic reticulum which regulates calmodulin (CaM) pathways. Allows ATP release into the extracellular space and activation or purinergic receptors. This Homo sapiens (Human) protein is Pannexin-3.